The following is a 146-amino-acid chain: Transcriptional regulator MraZ (146 aa).

SpoVT-AbrB domains follow at residues 5–52 (SAAL…PRAE) and 81–124 (AAEI…KEES).

It belongs to the MraZ family. Forms oligomers.

The protein localises to the cytoplasm. It is found in the nucleoid. In Alcanivorax borkumensis (strain ATCC 700651 / DSM 11573 / NCIMB 13689 / SK2), this protein is Transcriptional regulator MraZ.